A 637-amino-acid polypeptide reads, in one-letter code: Threonine--tRNA ligase (637 aa).

Positions 1-61 (MLNITLPDGS…VEDSAVQIIT (61 aa)) constitute a TGS domain. The segment at 242–533 (DHRKLGKQLD…LIENHAGSFP (292 aa)) is catalytic. Positions 333, 384, and 510 each coordinate Zn(2+).

It belongs to the class-II aminoacyl-tRNA synthetase family. Homodimer. The cofactor is Zn(2+).

It localises to the cytoplasm. The catalysed reaction is tRNA(Thr) + L-threonine + ATP = L-threonyl-tRNA(Thr) + AMP + diphosphate + H(+). Catalyzes the attachment of threonine to tRNA(Thr) in a two-step reaction: L-threonine is first activated by ATP to form Thr-AMP and then transferred to the acceptor end of tRNA(Thr). Also edits incorrectly charged L-seryl-tRNA(Thr). The protein is Threonine--tRNA ligase of Neisseria meningitidis serogroup B (strain ATCC BAA-335 / MC58).